An 863-amino-acid polypeptide reads, in one-letter code: Receptor-like protein 9DC3 (863 aa).

An N-terminal signal peptide occupies residues 1–21; sequence MGCVKLVFFMLYVFLFQLVSS. The Extracellular portion of the chain corresponds to 22–812; sequence SSLPHLCPED…EEDSPMISWQ (791 aa). Residues 24 to 90 are N-cap; the sequence is LPHLCPEDQA…GVHCDETTGQ (67 aa). Residues Asn71 and Asn108 are each glycosylated (N-linked (GlcNAc...) asparagine). One copy of the LRR 1; degenerate repeat lies at 91 to 114; it reads VIALDLRCSQLQGKFHSNSSLFQL. LRR repeat units follow at residues 115–138 and 140–163; these read SNLK…KFGE and SDLT…ISHL. An LRR 4; degenerate repeat occupies 164–190; it reads SKLHVLLIGDQYGLSIVPHNFEPLLKN. Residues Asn190, Asn203, and Asn211 are each glycosylated (N-linked (GlcNAc...) asparagine). LRR repeat units lie at residues 191–213, 214–237, 240–262, 264–286, 287–311, and 312–336; these read LTQL…SNFS, SHLT…VFHL, LEFL…KWNS, ASLM…SFSH, LTSL…LWNL, and TNIE…IFEK. The N-linked (GlcNAc...) asparagine glycan is linked to Asn261. Residues Asn299 and Asn310 are each glycosylated (N-linked (GlcNAc...) asparagine). Residues 337–357 form an LRR 11; degenerate repeat; sequence LKKLSLFRNDNLDGGLEFLSF. LRR repeat units follow at residues 358-382, 383-406, 408-428, 429-452, 454-476, 477-500, 502-524, 525-549, 551-572, 573-597, 599-623, 667-690, 691-714, 715-739, and 741-759; these read NTQL…ISGL, QNLE…IFSL, SLVE…EFKS, KTLS…LLNQ, NLQL…ICNL, KTLI…VVER, EYLS…TFSV, GNIL…LINC, YLAL…WLGH, LSQL…GNTN, FTRL…ILGN, LDSN…IIGD, LVGL…SFQN, LSVL…LASL, and FLEV…IPKG. N-linked (GlcNAc...) asparagine glycosylation is found at Asn378, Asn396, and Asn416. A glycan (N-linked (GlcNAc...) asparagine) is linked at Asn464. Residue Asn519 is glycosylated (N-linked (GlcNAc...) asparagine). Asn563 is a glycosylation site (N-linked (GlcNAc...) asparagine). 3 N-linked (GlcNAc...) asparagine glycosylation sites follow: Asn674, Asn698, and Asn714. Residues Asn746 and Asn767 are each glycosylated (N-linked (GlcNAc...) asparagine). The tract at residues 760 to 812 is C-cap/acidic domain; it reads KQFDSFGNTSYQGNDGLCGFPLSKLCGGDDQVTTPAELDQEEEEEDSPMISWQ. A helical membrane pass occupies residues 813–833; it reads GVLVGYGCGLVIGLSVIYIMW. Over 834–863 the chain is Cytoplasmic; the sequence is STQYPAWFSRMHLKLEQIVTTRMKKHKKRY.

Belongs to the RLP family.

Its subcellular location is the cell membrane. In terms of biological role, involved in plant defense. Confers resistance to the fungal pathogen C.fulvum through recognition of the AVR9 elicitor protein. The chain is Receptor-like protein 9DC3 from Solanum pimpinellifolium (Currant tomato).